The sequence spans 475 residues: Ribulose bisphosphate carboxylase large chain (475 aa).

A propeptide spanning residues 1-2 (MV) is cleaved from the precursor. An N-acetylproline modification is found at proline 3. N6,N6,N6-trimethyllysine is present on lysine 14. Residues asparagine 123 and threonine 173 each coordinate substrate. Lysine 175 functions as the Proton acceptor in the catalytic mechanism. Lysine 177 is a substrate binding site. Mg(2+) is bound by residues lysine 201, aspartate 203, and glutamate 204. Lysine 201 bears the N6-carboxylysine mark. The active-site Proton acceptor is histidine 294. Residues arginine 295, histidine 327, and serine 379 each coordinate substrate.

This sequence belongs to the RuBisCO large chain family. Type I subfamily. In terms of assembly, heterohexadecamer of 8 large chains and 8 small chains; disulfide-linked. The disulfide link is formed within the large subunit homodimers. Mg(2+) is required as a cofactor. Post-translationally, the disulfide bond which can form in the large chain dimeric partners within the hexadecamer appears to be associated with oxidative stress and protein turnover.

The protein localises to the plastid. It is found in the chloroplast. The enzyme catalyses 2 (2R)-3-phosphoglycerate + 2 H(+) = D-ribulose 1,5-bisphosphate + CO2 + H2O. The catalysed reaction is D-ribulose 1,5-bisphosphate + O2 = 2-phosphoglycolate + (2R)-3-phosphoglycerate + 2 H(+). RuBisCO catalyzes two reactions: the carboxylation of D-ribulose 1,5-bisphosphate, the primary event in carbon dioxide fixation, as well as the oxidative fragmentation of the pentose substrate in the photorespiration process. Both reactions occur simultaneously and in competition at the same active site. The polypeptide is Ribulose bisphosphate carboxylase large chain (Tetradesmus obliquus (Green alga)).